The primary structure comprises 470 residues: Negative regulator of sexual conjugation and meiosis (470 aa).

One can recognise a Protein kinase domain in the interval L18 to V295. ATP is bound by residues I24 to V32 and K47. Residue D143 is the Proton acceptor of the active site. At S469 the chain carries Phosphoserine.

It belongs to the protein kinase superfamily. Ser/Thr protein kinase family.

It carries out the reaction L-seryl-[protein] + ATP = O-phospho-L-seryl-[protein] + ADP + H(+). The catalysed reaction is L-threonyl-[protein] + ATP = O-phospho-L-threonyl-[protein] + ADP + H(+). In terms of biological role, this protein is a negative regulator of both sexual conjugation and meiosis. It phosphorylates mei2. It blocks the onset of meiosis until conjugation takes place. In Schizosaccharomyces pombe (strain 972 / ATCC 24843) (Fission yeast), this protein is Negative regulator of sexual conjugation and meiosis (ran1).